The chain runs to 353 residues: Photosystem II D2 protein (353 aa).

The residue at position 2 (Thr2) is an N-acetylthreonine. Thr2 carries the phosphothreonine modification. Residues 41–61 (CAYFAVGGWFTGTTFVTSWYT) traverse the membrane as a helical segment. His118 provides a ligand contact to chlorophyll a. Residues 125-141 (GFMLRQFELARSVQLRP) form a helical membrane-spanning segment. The pheophytin a site is built by Gln130 and Asn143. Residues 153–166 (VFVSVFLIYPLGQS) traverse the membrane as a helical segment. His198 provides a ligand contact to chlorophyll a. The helical transmembrane segment at 208–228 (AALLCAIHGATVENTLFEDGD) threads the bilayer. Residues His215 and Phe262 each coordinate a plastoquinone. His215 provides a ligand contact to Fe cation. His269 serves as a coordination point for Fe cation. A helical transmembrane segment spans residues 279-295 (GLWMSALGVVGLALNLR).

It belongs to the reaction center PufL/M/PsbA/D family. In terms of assembly, PSII is composed of 1 copy each of membrane proteins PsbA, PsbB, PsbC, PsbD, PsbE, PsbF, PsbH, PsbI, PsbJ, PsbK, PsbL, PsbM, PsbT, PsbX, PsbY, PsbZ, Psb30/Ycf12, at least 3 peripheral proteins of the oxygen-evolving complex and a large number of cofactors. It forms dimeric complexes. It depends on The D1/D2 heterodimer binds P680, chlorophylls that are the primary electron donor of PSII, and subsequent electron acceptors. It shares a non-heme iron and each subunit binds pheophytin, quinone, additional chlorophylls, carotenoids and lipids. There is also a Cl(-1) ion associated with D1 and D2, which is required for oxygen evolution. The PSII complex binds additional chlorophylls, carotenoids and specific lipids. as a cofactor.

The protein resides in the plastid. The protein localises to the chloroplast thylakoid membrane. It carries out the reaction 2 a plastoquinone + 4 hnu + 2 H2O = 2 a plastoquinol + O2. Photosystem II (PSII) is a light-driven water:plastoquinone oxidoreductase that uses light energy to abstract electrons from H(2)O, generating O(2) and a proton gradient subsequently used for ATP formation. It consists of a core antenna complex that captures photons, and an electron transfer chain that converts photonic excitation into a charge separation. The D1/D2 (PsbA/PsbD) reaction center heterodimer binds P680, the primary electron donor of PSII as well as several subsequent electron acceptors. D2 is needed for assembly of a stable PSII complex. This is Photosystem II D2 protein from Atropa belladonna (Belladonna).